A 238-amino-acid chain; its full sequence is Ribosomal RNA small subunit methyltransferase G (238 aa).

Residues Gly77, Phe82, 128–129, and Arg147 each bind S-adenosyl-L-methionine; that span reads AE.

This sequence belongs to the methyltransferase superfamily. RNA methyltransferase RsmG family.

It localises to the cytoplasm. Its function is as follows. Specifically methylates the N7 position of guanine in position 535 of 16S rRNA. This chain is Ribosomal RNA small subunit methyltransferase G, found in Lysinibacillus sphaericus (strain C3-41).